Here is an 815-residue protein sequence, read N- to C-terminus: Cell division control protein 48 homolog D (815 aa).

Ala2 carries the N-acetylalanine modification. Position 42 is a phosphoserine (Ser42). ATP is bound by residues Gly249–Thr256 and Gly522–Thr529. At Ser720 the chain carries Phosphoserine. A disordered region spans residues Gly772–Ser815. Positions Ala780 to Val798 are enriched in low complexity.

Belongs to the AAA ATPase family.

It localises to the nucleus. The protein resides in the cytoplasm. The protein localises to the cytoskeleton. It is found in the phragmoplast. Functionally, probably functions in cell division and growth processes. Interacts with certain SNAREs as part of specialized membrane fusion events where vesicles from the same organelle fuse (homotypic fusion). This is Cell division control protein 48 homolog D (CDC48D) from Arabidopsis thaliana (Mouse-ear cress).